The following is a 137-amino-acid chain: Leaf-specific thionin (137 aa).

Residues 1-28 (MATNKSIKSVVICVLILGLVLEQVQVEA) form the signal peptide. 4 cysteine pairs are disulfide-bonded: Cys31–Cys68, Cys32–Cys60, Cys40–Cys58, and Cys44–Cys54. Positions 75–137 (LNLLPESGEP…DGEVIQSVEA (63 aa)) are cleaved as a propeptide — acidic domain.

Belongs to the plant thionin (TC 1.C.44) family. 4 C-C subfamily.

It localises to the secreted. Its function is as follows. Thionins are small plant proteins which are toxic to animal cells. They seem to exert their toxic effect at the level of the cell membrane. Their precise function is not known. In Hordeum vulgare (Barley), this protein is Leaf-specific thionin (THI1.5).